Here is a 276-residue protein sequence, read N- to C-terminus: Rhomboid protease GlpG (276 aa).

A run of 6 helical transmembrane segments spans residues 94–114 (GPFT…MNVV), 142–162 (ALMH…WYLG), 169–189 (LGSG…GYVQ), 192–212 (FSGP…GYAW), 229–249 (LITF…GMSI), and 250–270 (ANGA…ADTL). Catalysis depends on Ser201, which acts as the Nucleophile. The active site involves His254.

It belongs to the peptidase S54 family.

It is found in the cell inner membrane. The catalysed reaction is Cleaves type-1 transmembrane domains using a catalytic dyad composed of serine and histidine that are contributed by different transmembrane domains.. Rhomboid-type serine protease that catalyzes intramembrane proteolysis. The sequence is that of Rhomboid protease GlpG from Enterobacter sp. (strain 638).